Here is a 339-residue protein sequence, read N- to C-terminus: Dihydroorotase (339 aa).

Positions 12 and 14 each coordinate Zn(2+). Substrate-binding positions include 14–16 (HVR) and Asn-40. 4 residues coordinate Zn(2+): Lys-94, His-133, His-167, and Asp-239. Lys-94 is subject to N6-carboxylysine. His-133 provides a ligand contact to substrate. Residue Asp-239 is part of the active site. His-243 and Ala-255 together coordinate substrate.

The protein belongs to the metallo-dependent hydrolases superfamily. DHOase family. Class II DHOase subfamily. As to quaternary structure, homodimer. Zn(2+) is required as a cofactor.

The catalysed reaction is (S)-dihydroorotate + H2O = N-carbamoyl-L-aspartate + H(+). It functions in the pathway pyrimidine metabolism; UMP biosynthesis via de novo pathway; (S)-dihydroorotate from bicarbonate: step 3/3. Functionally, catalyzes the reversible cyclization of carbamoyl aspartate to dihydroorotate. The protein is Dihydroorotase of Helicobacter acinonychis (strain Sheeba).